Reading from the N-terminus, the 383-residue chain is ATP phosphoribosyltransferase regulatory subunit (383 aa).

The protein belongs to the class-II aminoacyl-tRNA synthetase family. HisZ subfamily. As to quaternary structure, heteromultimer composed of HisG and HisZ subunits.

Its subcellular location is the cytoplasm. The protein operates within amino-acid biosynthesis; L-histidine biosynthesis; L-histidine from 5-phospho-alpha-D-ribose 1-diphosphate: step 1/9. In terms of biological role, required for the first step of histidine biosynthesis. May allow the feedback regulation of ATP phosphoribosyltransferase activity by histidine. The polypeptide is ATP phosphoribosyltransferase regulatory subunit (Paraburkholderia xenovorans (strain LB400)).